The chain runs to 289 residues: Thiosulfate sulfurtransferase (289 aa).

Residues 24-142 (VGAGLRVLDA…WVKEGHPVTA (119 aa)) form the Rhodanese 1 domain. Residues 143-158 (EPSQPAEAVFKAKLDK) form a hinge region. In terms of domain architecture, Rhodanese 2 spans 172–284 (GSKKFQVVDS…WFHRAPPQYK (113 aa)). Arginine 186 provides a ligand contact to substrate. Cysteine 244 acts as the Cysteine persulfide intermediate in catalysis. Lysine 246 lines the substrate pocket.

Monomer. As to expression, expressed in numerous tissues.

The protein localises to the mitochondrion matrix. It catalyses the reaction thiosulfate + hydrogen cyanide = thiocyanate + sulfite + 2 H(+). Together with MRPL18, acts as a mitochondrial import factor for the cytosolic 5S rRNA. Only the nascent unfolded cytoplasmic form is able to bind to the 5S rRNA. Formation of iron-sulfur complexes and cyanide detoxification. This chain is Thiosulfate sulfurtransferase (TST), found in Gallus gallus (Chicken).